Here is a 785-residue protein sequence, read N- to C-terminus: MVVPSLKLQDLIEEIRGAKTQAQEREVIQKECAHIRASFRDGDPVHRHRQLAKLLYVHMLGYPAHFGQMECLKLIASSRFTDKRVGYLGAMLLLDERHDAHLLITNSIKNDLSQGIQPVQGLALCTLSTMGSAEMCRDLAPEVEKLLLQPSPYVRKKAILTAVHMIRKVPELSSVFLPPCAQLLHERHHGILLGTITLITELCERSPAALRHFRKVVPQLVHILRTLVTMGYSTEHSISGVSDPFLQVQILRLLRILGRNHEESSETMNDLLAQVATNTDTSRNAGNAVLFETVLTIMDIRSAAGLRVLAVNILGRFLLNSDRNIRYVALTSLLRLVQSDHSAVQRHRPTVVECLRETDASLSRRALELSLALVNSSNVRAMMQELQAFLESCPPDLRADCASGILLAAERFAPTKRWHIDTILHVLTTAGTHVRDDAVANLTQLIGGAQELHAYSVRRLYNALAEDISQQPLVQVAAWCIGEYGDLLLAGNCEEIEPLQVDEEEVLALLEKVLQSHMSLPATRGYALTALMKLSTRLCGDNNRIRQVVSIYGSCLDVELQQRAVEYDTLFRKYDHMRAAILEKMPLVERDGPQADEEAKESKEAAQLSEAAPVPTEPQASQLLDLLDLLDGASGDVQHPPHLDPSPGGALVHLLDLPCVPPPPAPIPDLKVFEREGVQLNLSFIRPPENPALLLITITATNFSEGDVTHFICQAAVPKSLQLQLQAPSGNTVPARGGLPITQLFRILNPNKAPLRLKLRLTYDHFHQSVQEIFEVNNLPVESWQ.

Residues 369-379 form an essential for ubiquitin-binding region; it reads LSLALVNSSNV. A disordered region spans residues 592–617; sequence GPQADEEAKESKEAAQLSEAAPVPTE. Positions 665–780 constitute a GAE domain; sequence APIPDLKVFE…QEIFEVNNLP (116 aa).

The protein belongs to the adaptor complexes large subunit family. As to quaternary structure, may interact with AP1S1/Sigma1A-adaptin and AP1S2/Sigma1B-adaptin. Probably does not interact with APB1. Interacts (via GAE domain) with RABEP1, NECAP1, CLINT1 and AFTPH/aftiphilin. (Microbial infection) Interacts with HBV major surface antigen L. Interacts with HBV core protein C in a ubiquitin-dependent manner. As to expression, expressed in all but one (skeletal muscle) tissues examined.

Its subcellular location is the golgi apparatus membrane. The protein resides in the cytoplasmic vesicle membrane. The protein localises to the endosome membrane. Its function is as follows. May function in protein sorting in late endosomes or multivesucular bodies (MVBs). (Microbial infection) Involved in MVB-assisted maturation of hepatitis B virus (HBV). This chain is AP-1 complex subunit gamma-like 2 (AP1G2), found in Homo sapiens (Human).